The primary structure comprises 126 residues: Probable small nuclear ribonucleoprotein Sm D1 (126 aa).

One can recognise a Sm domain in the interval 2–74 (KLVRFLMKLS…IRYIILPDPL (73 aa)). The disordered stretch occupies residues 86-126 (RKKARAARAGASRGRGRGGMRGGRGGRGRGRGGPRGGGPRR). Residues 99-126 (GRGRGGMRGGRGGRGRGRGGPRGGGPRR) are compositionally biased toward basic residues.

It belongs to the snRNP core protein family.

The protein localises to the nucleus. Its subcellular location is the cytoplasm. It localises to the cytosol. Functionally, plays a role in pre-mRNA splicing as a core component of the spliceosomal U1, U2, U4 and U5 small nuclear ribonucleoproteins (snRNPs), the building blocks of the spliceosome. The protein is Probable small nuclear ribonucleoprotein Sm D1 (snr-3) of Caenorhabditis elegans.